Reading from the N-terminus, the 67-residue chain is Probable Sec-independent protein translocase protein TatE (67 aa).

The chain crosses the membrane as a helical span at residues 1–21 (MEGISIAKLLIIGALIVLLFG). The disordered stretch occupies residues 46–67 (EDTSATRTTAEDVPAERVVHKD).

The protein belongs to the TatA/E family. TatE subfamily.

The protein localises to the cell inner membrane. Functionally, part of the twin-arginine translocation (Tat) system that transports large folded proteins containing a characteristic twin-arginine motif in their signal peptide across membranes. TatE shares overlapping functions with TatA. The chain is Probable Sec-independent protein translocase protein TatE from Pantoea vagans (strain C9-1) (Pantoea agglomerans (strain C9-1)).